The chain runs to 407 residues: Transcriptional regulator UL34 (407 aa).

Residues 268-330 (AAGPPEADEN…ENEEEEEELF (63 aa)) form a disordered region. The span at 273–286 (EADENNDEGEEDDD) shows a compositional bias: acidic residues. The span at 287 to 301 (ELRHSDPAPLHDSKK) shows a compositional bias: basic and acidic residues. The span at 302-312 (PRNARRPRTRV) shows a compositional bias: basic residues.

The protein belongs to the HHV-5 UL34 protein family.

Its subcellular location is the host nucleus. Acts as a transcriptional repressor of the US3 gene expression through a specific DNA sequence named the transcriptional repressive element (tre). The chain is Transcriptional regulator UL34 (UL34) from Homo sapiens (Human).